The following is a 241-amino-acid chain: 2-C-methyl-D-erythritol 4-phosphate cytidylyltransferase (241 aa).

This sequence belongs to the IspD/TarI cytidylyltransferase family. IspD subfamily. As to quaternary structure, homodimer.

The catalysed reaction is 2-C-methyl-D-erythritol 4-phosphate + CTP + H(+) = 4-CDP-2-C-methyl-D-erythritol + diphosphate. The protein operates within isoprenoid biosynthesis; isopentenyl diphosphate biosynthesis via DXP pathway; isopentenyl diphosphate from 1-deoxy-D-xylulose 5-phosphate: step 2/6. Catalyzes the formation of 4-diphosphocytidyl-2-C-methyl-D-erythritol from CTP and 2-C-methyl-D-erythritol 4-phosphate (MEP). This is 2-C-methyl-D-erythritol 4-phosphate cytidylyltransferase from Yersinia pseudotuberculosis serotype IB (strain PB1/+).